A 1977-amino-acid chain; its full sequence is Voltage-dependent L-type calcium channel subunit alpha-1F (1977 aa).

Basic and acidic residues predominate over residues 1-11 (MSESEGGKDTT). The disordered stretch occupies residues 1-60 (MSESEGGKDTTPEPSPANGAGPGPEWGLCPGPPAVEGESSGASGLGTPKRRNQHSKHKTV). At 1–92 (MSESEGGKDT…RSCISIVEWK (92 aa)) the chain is on the cytoplasmic side. Residues 48-59 (PKRRNQHSKHKT) show a composition bias toward basic residues. The stretch at 79–375 (NPLRRSCISI…LVLGVLSGEF (297 aa)) is one I repeat. The helical transmembrane segment at 93–111 (PFDILILLTIFANCVALGV) threads the bilayer. Topologically, residues 112 to 129 (YIPFPEDDSNTANHNLEQ) are extracellular. Residues 130-149 (VEYVFLVIFTVETVLKIVAY) traverse the membrane as a helical segment. Over 150–161 (GLVLHPSAYIRN) the chain is Cytoplasmic. The helical transmembrane segment at 162 to 180 (GWNLLDFIIVVVGLFSVLL) threads the bilayer. The Extracellular segment spans residues 181–201 (EQGPGRPGDAPHTGGKPGGFD). The helical transmembrane segment at 202–220 (VKALRAFRVLRPLRLVSGV) threads the bilayer. Topologically, residues 221–239 (PSLHIVLNSIMKALVPLLH) are cytoplasmic. The chain crosses the membrane as a helical span at residues 240 to 259 (IALLVLFVIIIYAIIGLELF). Residues 260-347 (LGRMHKTCYF…WMQDAMGYEL (88 aa)) lie on the Extracellular side of the membrane. An N-linked (GlcNAc...) asparagine glycan is attached at Asn-295. Residue Glu-330 coordinates Ca(2+). The chain crosses the membrane as a helical span at residues 348–372 (PWVYFVSLVIFGSFFVLNLVLGVLS). The Cytoplasmic portion of the chain corresponds to 373–529 (GEFSKEREKA…ARCRRAVKSN (157 aa)). Residues 395 to 412 (QQMEEDLRGYLDWITQAE) form a binding to the beta subunit region. Disordered stretches follow at residues 418-441 (DPSA…PQLA) and 455-488 (SHST…EDEE). The span at 455–469 (SHSTRSTHSTSSHAS) shows a compositional bias: low complexity. The II repeat unit spans residues 515–761 (NRVLRARCRR…VFLAIAVDNL (247 aa)). Residues 530–549 (ACYWAVLLLVFLNTLTIASE) form a helical membrane-spanning segment. Residues 550-564 (HHGQPVWLTQIQEYA) lie on the Extracellular side of the membrane. A helical membrane pass occupies residues 565–583 (NKVLLCLFTVEMLLKLYGL). The Cytoplasmic portion of the chain corresponds to 584–591 (GPSAYVSS). A helical membrane pass occupies residues 592 to 610 (FFNRFDCFVVCGGILETTL). The Extracellular segment spans residues 611–620 (VEVGAMQPLG). A helical transmembrane segment spans residues 621 to 639 (ISVLRCVRLLRIFKVTRHW). Topologically, residues 640-658 (ASLSNLVASLLNSMKSIAS) are cytoplasmic. A helical membrane pass occupies residues 659 to 679 (LLLLLFLFIIIFSLLGMQLFG). The Extracellular segment spans residues 680–733 (GKFNFDQTHTKRSTFDTFPQALLTVFQILTGEDWNVVMYDGIMAYGGPFFPGML). Glu-711 is a binding site for Ca(2+). A helical membrane pass occupies residues 734–758 (VCIYFIILFICGNYILLNVFLAIAV). Over 759 to 871 (DNLASGDAGT…KGCHTLIHHH (113 aa)) the chain is Cytoplasmic. The disordered stretch occupies residues 767–830 (GTAKDKGGEK…EEEEEGAGGV (64 aa)). Residues 768–783 (TAKDKGGEKSNEKDLP) show a composition bias toward basic and acidic residues. Residues 807-826 (DMEEEEEEEEEEEEEEEEEG) show a composition bias toward acidic residues. An III repeat occupies 858 to 1140 (NPLRKGCHTL…IFVGFVIITF (283 aa)). A helical membrane pass occupies residues 872–890 (VFTNLILVFIILSSVSLAA). Residues 891–906 (EDPIRAHSFRNHILGY) are Extracellular-facing. Residues 907–926 (FDYAFTSIFTVEILLKMTVF) form a helical membrane-spanning segment. The Cytoplasmic portion of the chain corresponds to 927 to 938 (GAFLHRGSFCRS). A helical transmembrane segment spans residues 939-957 (WFNMLDLLVVSVSLISFGI). At 958-963 (HSSAIS) the chain is on the extracellular side. A helical transmembrane segment spans residues 964 to 983 (VVKILRVLRVLRPLRAINRA). Residues 984 to 1002 (KGLKHVVQCVFVAIRTIGN) are Cytoplasmic-facing. Residues 1003-1022 (IMIVTTLLQFMFACIGVQLF) traverse the membrane as a helical segment. The Extracellular segment spans residues 1023–1112 (KGKFYTCTDE…HGPIYNYRVE (90 aa)). Residues 1060 to 1150 (RLWVNSDFNF…RAQGEQEYQN (91 aa)) are dihydropyridine binding. Glu-1086 is a Ca(2+) binding site. The chain crosses the membrane as a helical span at residues 1113-1133 (ISVFFIVYIIIIAFFMMNIFV). Over 1134–1190 (GFVIITFRAQGEQEYQNCELDKNQRQCVEYALKAQPLRRYIPKNPHQYRVWATVNSA) the chain is Cytoplasmic. An IV repeat occupies 1177 to 1444 (NPHQYRVWAT…LFVAVIMDNF (268 aa)). Residues 1191-1209 (AFEYLMFLLILLNTVALAM) traverse the membrane as a helical segment. Topologically, residues 1210 to 1224 (QHYEQTAPFNYAMDI) are extracellular. Residues 1225 to 1244 (LNMVFTGLFTIEMVLKIIAF) traverse the membrane as a helical segment. The Cytoplasmic portion of the chain corresponds to 1245–1251 (KPKHYFT). The chain crosses the membrane as a helical span at residues 1252-1273 (DAWNTFDALIVVGSIVDIAVTE). The Extracellular portion of the chain corresponds to 1274–1290 (VNNGGHLGESSEDSSRI). The chain crosses the membrane as a helical span at residues 1291-1310 (SITFFRLFRVMRLVKLLSKG). Over 1311-1329 (EGIRTLLWTFIKSFQALPY) the chain is Cytoplasmic. Residues 1330–1349 (VALLIAMIFFIYAVIGMQMF) form a helical membrane-spanning segment. The Extracellular segment spans residues 1350 to 1416 (GKVALQDGTQ…GEEFTCGSNF (67 aa)). The dihydropyridine binding stretch occupies residues 1397–1463 (RCDPESDFGP…LGPHHLDEFK (67 aa)). The phenylalkylamine binding stretch occupies residues 1409–1452 (EFTCGSNFAIAYFISFFMLCAFLIINLFVAVIMDNFDYLTRDWS). The helical transmembrane segment at 1417–1441 (AIAYFISFFMLCAFLIINLFVAVIM) threads the bilayer. Residues 1442–1977 (DNFDYLTRDW…GDEMACVHAL (536 aa)) lie on the Cytoplasmic side of the membrane. Disordered stretches follow at residues 1637–1754 (CDTE…EVPD) and 1816–1841 (DLPI…WATP). Residues 1638 to 1657 (DTEEEEEEGQEGVEEEDEKD) show a composition bias toward acidic residues. Polar residues-rich tracts occupy residues 1661–1670 (NKATMVSQPS), 1702–1716 (TPTS…AGSN), 1733–1743 (GNSQPKGTKGQ), and 1829–1840 (SGPNRAQGSWAT).

It belongs to the calcium channel alpha-1 subunit (TC 1.A.1.11) family. CACNA1F subfamily. Voltage-dependent calcium channels are multisubunit complexes, consisting of alpha-1, alpha-2, beta and delta subunits in a 1:1:1:1 ratio. The channel activity is directed by the pore-forming and voltage-sensitive alpha-1 subunit. In many cases, this subunit is sufficient to generate voltage-sensitive calcium channel activity. The auxiliary subunits beta and alpha-2/delta linked by a disulfide bridge regulate the channel activity. Interacts (via IQ domain) with CABP4; in a calcium independent manner. In terms of assembly, interacts with CABP4; suppresses robust calcium-dependent inactivation of channel without enhancing the hyperpolarized voltage-dependent activation. As to expression, expression in skeletal muscle and retina. Isoform 4 is expressed in retina.

Its subcellular location is the membrane. It carries out the reaction Ca(2+)(in) = Ca(2+)(out). Voltage-sensitive calcium channels (VSCC) mediate the entry of calcium ions into excitable cells and are also involved in a variety of calcium-dependent processes, including muscle contraction, hormone or neurotransmitter release, gene expression, cell motility, cell division and cell death. The isoform alpha-1F gives rise to L-type calcium currents. Long-lasting (L-type) calcium channels belong to the 'high-voltage activated' (HVA) group. They are blocked by dihydropyridines (DHP), phenylalkylamines, and by benzothiazepines. Activates at more negative voltages and does not undergo calcium-dependent inactivation (CDI), due to incoming calcium ions, during depolarization. Its function is as follows. Voltage-dependent L-type calcium channel activates at more hyperpolarized voltages and exhibits a robust calcium-dependent inactivation (CDI), due to incoming calcium ions, during depolarizations. Functionally, voltage-sensitive calcium channels (VSCC) mediate the entry of calcium ions into excitable cells and are also involved in a variety of calcium-dependent processes, including muscle contraction, hormone or neurotransmitter release, gene expression, cell motility, cell division and cell death. This Homo sapiens (Human) protein is Voltage-dependent L-type calcium channel subunit alpha-1F.